We begin with the raw amino-acid sequence, 406 residues long: NIPA-like protein 3 (406 aa).

The next 4 membrane-spanning stretches (helical) occupy residues 33-53 (NLIG…ALNL), 76-96 (WWLG…SYAF), 101-121 (LIVP…IIFI), and 135-155 (VLSF…VTFA). Residue Asn166 is glycosylated (N-linked (GlcNAc...) asparagine). 5 helical membrane-spanning segments follow: residues 171–191 (LVSW…CLLL), 202–222 (IVVI…TVKA), 240–260 (PIFY…AAFL), 271–291 (LIAS…GAIF), and 300–320 (VLHI…VFLI). Ser372 bears the Phosphoserine mark.

This sequence belongs to the NIPA family.

The protein localises to the membrane. This chain is NIPA-like protein 3 (NIPAL3), found in Homo sapiens (Human).